The following is a 113-amino-acid chain: Fruiting body-specific class I hydrophobin fbh1 (113 aa).

Positions 1–20 (MFSIRIATVVLAASALLAAA) are cleaved as a signal peptide. 4 cysteine pairs are disulfide-bonded: Cys-33–Cys-92, Cys-40–Cys-86, Cys-41–Cys-73, and Cys-93–Cys-106.

The protein belongs to the fungal hydrophobin family. As to quaternary structure, self-assembles to form functional amyloid fibrils called rodlets. Self-assembly into fibrillar rodlets occurs spontaneously at hydrophobic:hydrophilic interfaces and the rodlets further associate laterally to form amphipathic monolayers.

The protein localises to the secreted. Its subcellular location is the cell wall. Functionally, aerial growth, conidiation, and dispersal of filamentous fungi in the environment rely upon a capability of their secreting small amphipathic proteins called hydrophobins (HPBs) with low sequence identity. Class I can self-assemble into an outermost layer of rodlet bundles on aerial cell surfaces, conferring cellular hydrophobicity that supports fungal growth, development and dispersal; whereas Class II form highly ordered films at water-air interfaces through intermolecular interactions but contribute nothing to the rodlet structure. Fbh1 is a fruiting body-specific class I hydrophobin that is involved in the growth rate and primordia formation. The chain is Fruiting body-specific class I hydrophobin fbh1 from Pleurotus ostreatus (strain PC15) (Oyster mushroom).